The following is a 91-amino-acid chain: Progonadoliberin-1 (91 aa).

The signal sequence occupies residues 1–21 (MVVKTWMPWLLVSSVLSQGCC). At Gln-22 the chain carries Pyrrolidone carboxylic acid. A Glycine amide modification is found at Gly-31.

This sequence belongs to the GnRH family. As to expression, expressed in the cell bodies of a cluster of neurons in the preoptic region.

The protein localises to the secreted. In terms of biological role, stimulates the secretion of gonadotropins. The protein is Progonadoliberin-1 (gnrh1) of Oryzias latipes (Japanese rice fish).